A 139-amino-acid polypeptide reads, in one-letter code: Histone H3 (139 aa).

The disordered stretch occupies residues 1–48; it reads MARTKSTVIARKVTGGKAPRKQIGSKAARKSAAPSNTSGGVKKPHRYK. N6,N6,N6-trimethyllysine; alternate is present on lysine 5. An N6,N6-dimethyllysine; alternate modification is found at lysine 5. Lysine 5 and lysine 12 each carry N6-methyllysine; alternate. Residues lysine 12, lysine 17, lysine 21, lysine 26, lysine 30, and lysine 42 each carry the N6-acetyllysine; alternate modification. Lysine 17 carries the post-translational modification N6,N6-dimethyllysine; alternate. An N6-methyllysine; alternate mark is found at lysine 21, lysine 26, lysine 30, and lysine 42. 2 positions are modified to N6,N6,N6-trimethyllysine; alternate: lysine 30 and lysine 42. Lysine 30 and lysine 42 each carry N6,N6-dimethyllysine; alternate. Residues lysine 62 and lysine 70 each carry the N6-acetyllysine modification. N6,N6,N6-trimethyllysine; alternate is present on lysine 85. At lysine 85 the chain carries N6,N6-dimethyllysine; alternate. Lysine 85 is modified (N6-methyllysine; alternate).

Belongs to the histone H3 family. The nucleosome is a histone octamer containing two molecules each of H2A, H2B, H3 and H4 assembled in one H3-H4 heterotetramer and two H2A-H2B heterodimers. The octamer wraps approximately 147 bp of DNA. In terms of processing, mono-, di- and trimethylated by the COMPASS complex to form H3K4me1/2/3. H3K4me activates gene expression by regulating transcription elongation and plays a role in telomere length maintenance. H3K4me enrichment correlates with transcription levels, and occurs in a 5' to 3' gradient with H3K4me3 enrichment at the 5'-end of genes, shifting to H3K4me2 and then H3K4me1. Methylated by SET2 to form H3K36me. H3K36me represses gene expression. Methylated by DOT1 to form H3K79me. H3K79me is required for association of SIR proteins with telomeric regions and for telomeric silencing. The COMPASS-mediated formation of H3K4me2/3 and the DOT1-mediated formation of H3K79me require H2BK123ub1. Post-translationally, acetylation of histone H3 leads to transcriptional activation. Acetylated by GCN5 to form H3K14ac. H3K14ac can also be formed by ESA1. H3K56ac formation occurs predominantly in newly synthesized H3 molecules during G1, S and G2/M of the cell cycle and may be involved in DNA repair.

The protein resides in the nucleus. The protein localises to the chromosome. Core component of nucleosome. Nucleosomes wrap and compact DNA into chromatin, limiting DNA accessibility to the cellular machineries which require DNA as a template. Histones thereby play a central role in transcription regulation, DNA repair, DNA replication and chromosomal stability. DNA accessibility is regulated via a complex set of post-translational modifications of histones, also called histone code, and nucleosome remodeling. This chain is Histone H3 (HHT1), found in Yarrowia lipolytica (strain CLIB 122 / E 150) (Yeast).